An 81-amino-acid chain; its full sequence is Cytotoxin (81 aa).

The N-terminal stretch at 1 to 21 (MKTLLLTTVVVTIVCLDLEYT) is a signal peptide. Disulfide bonds link C24–C42, C35–C59, C63–C74, and C75–C80.

It belongs to the three-finger toxin family. Short-chain subfamily. Type IA cytotoxin sub-subfamily. In terms of assembly, monomer in solution; Homodimer and oligomer in the presence of negatively charged lipids forming a pore with a size ranging between 20 and 30 Angstroms. In terms of tissue distribution, expressed by the venom gland.

The protein resides in the secreted. It localises to the target cell membrane. Its function is as follows. Shows cytolytic activity on many different cells by forming pore in lipid membranes. In vivo, increases heart rate or kills the animal by cardiac arrest. In addition, it binds to heparin with high affinity, interacts with Kv channel-interacting protein 1 (KCNIP1) in a calcium-independent manner, and binds to integrin alpha-V/beta-3 (ITGAV/ITGB3) with moderate affinity. The polypeptide is Cytotoxin (Naja sputatrix (Malayan spitting cobra)).